Reading from the N-terminus, the 267-residue chain is 2-keto-3-deoxy-L-rhamnonate aldolase (267 aa).

Catalysis depends on H49, which acts as the Proton acceptor. Q151 is a binding site for substrate. A Mg(2+)-binding site is contributed by E153. Residues A178 and D179 each coordinate substrate. D179 contacts Mg(2+).

The protein belongs to the HpcH/HpaI aldolase family. KDR aldolase subfamily. In terms of assembly, homohexamer. The cofactor is Mg(2+).

It catalyses the reaction 2-dehydro-3-deoxy-L-rhamnonate = (S)-lactaldehyde + pyruvate. Its function is as follows. Catalyzes the reversible retro-aldol cleavage of 2-keto-3-deoxy-L-rhamnonate (KDR) to pyruvate and lactaldehyde. This Salmonella enteritidis PT4 (strain P125109) protein is 2-keto-3-deoxy-L-rhamnonate aldolase.